Consider the following 71-residue polypeptide: Disintegrin tzabcanin (71 aa).

Positions 1–71 (GEECDCGSPA…ADCPRNHFHA (71 aa)) constitute a Disintegrin domain. 6 disulfide bridges follow: cysteine 4/cysteine 19, cysteine 6/cysteine 14, cysteine 13/cysteine 36, cysteine 27/cysteine 33, cysteine 32/cysteine 57, and cysteine 45/cysteine 64. Positions 49 to 51 (RGD) match the Cell attachment site motif.

This sequence belongs to the venom metalloproteinase (M12B) family. P-II subfamily. P-IIa sub-subfamily. In terms of tissue distribution, expressed by the venom gland.

It is found in the secreted. Inhibits fibrinogen interaction with platelets. Acts by binding to alpha-IIb/beta-3 (ITGA2B/ITGB3) on the platelet surface and inhibits aggregation induced by ADP, thrombin, platelet-activating factor and collagen. Inhibits cell adhesion to vitronectin, probably by blocking its receptor integrin alpha-V/beta-3 (ITGAV/ITGB3), and to fibronectin in vitro. Shows little to no cytotoxicity in vitro. The chain is Disintegrin tzabcanin from Crotalus tzabcan (Yucatan neotropical rattlesnake).